A 652-amino-acid chain; its full sequence is uncharacterized protein (652 aa).

2 stretches are compositionally biased toward basic and acidic residues: residues 1-13 (MSVTESKAKTERK) and 641-652 (ATERTDNLADAA). Disordered stretches follow at residues 1–21 (MSVTESKAKTERKSSRKPAKT) and 628–652 (VPGWMCAPRPQTDATERTDNLADAA).

The protein belongs to the ParB family.

This is an uncharacterized protein from Escherichia coli O157:H7.